Here is a 468-residue protein sequence, read N- to C-terminus: 6-phosphogluconate dehydrogenase, decarboxylating (468 aa).

NADP(+)-binding positions include 10–15 (GMAVMG), 33–35 (NRS), 74–76 (VKA), and Asn102. Substrate is bound by residues Asn102 and 128-130 (SGG). Residue Lys183 is the Proton acceptor of the active site. 186–187 (HN) provides a ligand contact to substrate. The active-site Proton donor is Glu190. Residues Tyr191, Lys260, Arg287, Arg445, and His451 each coordinate substrate.

Belongs to the 6-phosphogluconate dehydrogenase family. As to quaternary structure, homodimer.

The catalysed reaction is 6-phospho-D-gluconate + NADP(+) = D-ribulose 5-phosphate + CO2 + NADPH. Its pathway is carbohydrate degradation; pentose phosphate pathway; D-ribulose 5-phosphate from D-glucose 6-phosphate (oxidative stage): step 3/3. Functionally, catalyzes the oxidative decarboxylation of 6-phosphogluconate to ribulose 5-phosphate and CO(2), with concomitant reduction of NADP to NADPH. The protein is 6-phosphogluconate dehydrogenase, decarboxylating (gnd) of Klebsiella pneumoniae.